Reading from the N-terminus, the 127-residue chain is Putative histone H3.3-like type 3 (127 aa).

Lys-6 and Lys-15 each carry N6-acetyllysine. 3 positions are modified to N6-methylated lysine: Lys-19, Lys-28, and Lys-71.

It belongs to the histone H3 family. In terms of assembly, the nucleosome is a histone octamer containing two molecules each of H2A, H2B, H3 and H4 assembled in one H3-H4 heterotetramer and two H2A-H2B heterodimers. The octamer wraps approximately 147 bp of DNA. Post-translationally, acetylation is generally linked to gene activation.

The protein resides in the nucleus. It localises to the chromosome. In terms of biological role, putative variant histone H3 which may replace conventional H3 in a subset of nucleosomes. Nucleosomes wrap and compact DNA into chromatin, limiting DNA accessibility to the cellular machineries which require DNA as a template. Histones thereby play a central role in transcription regulation, DNA repair, DNA replication and chromosomal stability. DNA accessibility is regulated via a complex set of post-translational modifications of histones, also called histone code, and nucleosome remodeling. This chain is Putative histone H3.3-like type 3 (his-69), found in Caenorhabditis elegans.